The chain runs to 202 residues: Glycerol-3-phosphate acyltransferase (202 aa).

4 helical membrane-spanning segments follow: residues 2–22 (ANLLFALAAYLIGSVSFAVVV), 82–102 (DTGLAMVALAVFLGHLFPVFH), 119–139 (AIDPILGLGTLATWLIIAFFF), and 158–178 (VLMNGVDVMAGAIFVISVLLI).

It belongs to the PlsY family. Probably interacts with PlsX.

It localises to the cell inner membrane. The catalysed reaction is an acyl phosphate + sn-glycerol 3-phosphate = a 1-acyl-sn-glycero-3-phosphate + phosphate. Its pathway is lipid metabolism; phospholipid metabolism. In terms of biological role, catalyzes the transfer of an acyl group from acyl-phosphate (acyl-PO(4)) to glycerol-3-phosphate (G3P) to form lysophosphatidic acid (LPA). This enzyme utilizes acyl-phosphate as fatty acyl donor, but not acyl-CoA or acyl-ACP. This Cupriavidus taiwanensis (strain DSM 17343 / BCRC 17206 / CCUG 44338 / CIP 107171 / LMG 19424 / R1) (Ralstonia taiwanensis (strain LMG 19424)) protein is Glycerol-3-phosphate acyltransferase.